We begin with the raw amino-acid sequence, 366 residues long: MSSPQHVIIGLSGGVDSAVAACLLIKQGYHVTGLNIRVLDTPEDTPTLAPSAMRISDSEEFDFPVFTLNLSAKFARDVVGYFHDDYLAGRTPNPCMVCNKAIKWFGLFEAMRLLRADLVATGHYARTELRDAVTRLLKGVDPEKDQSYFLWMLTQAELAKTLFPLGGYTKAEVRELARSFGVHAAEKKESQEICFVPHDDYCAYLANAIPGLEARVAGGEIVDQAGKVIGHHRGYPFYTIGQRRGLGVSTGEPVYVTEIDAEHNRIHVGSKADLECRSLIASGMNWIGIATPDKSFEAEARIRYRDRQSACMIEPMDDNRAWVSFREPKQGVACGQAVVFYDGDEVLGGGIIAKVNPEAPPQKILG.

Residues 10–17 and I36 contribute to the ATP site; that span reads GLSGGVDS. The active-site Nucleophile is the C98. The cysteines at positions 98 and 194 are disulfide-linked. G122 contributes to the ATP binding site. The segment at 144 to 146 is interaction with tRNA; sequence KDQ. C194 acts as the Cysteine persulfide intermediate in catalysis. An interaction with tRNA region spans residues 303 to 304; it reads RY.

It belongs to the MnmA/TRMU family.

The protein localises to the cytoplasm. It catalyses the reaction S-sulfanyl-L-cysteinyl-[protein] + uridine(34) in tRNA + AH2 + ATP = 2-thiouridine(34) in tRNA + L-cysteinyl-[protein] + A + AMP + diphosphate + H(+). Its function is as follows. Catalyzes the 2-thiolation of uridine at the wobble position (U34) of tRNA, leading to the formation of s(2)U34. The chain is tRNA-specific 2-thiouridylase MnmA from Chlorobaculum tepidum (strain ATCC 49652 / DSM 12025 / NBRC 103806 / TLS) (Chlorobium tepidum).